Reading from the N-terminus, the 85-residue chain is Large ribosomal subunit protein bL27 (85 aa).

Positions 1 to 22 (MAHKKAGGSTRNGRDSESKRLG) are disordered.

The protein belongs to the bacterial ribosomal protein bL27 family.

The polypeptide is Large ribosomal subunit protein bL27 (Aliivibrio fischeri (strain ATCC 700601 / ES114) (Vibrio fischeri)).